A 280-amino-acid chain; its full sequence is UBX domain-containing protein 10 (280 aa).

The tract at residues 41-94 (SAKGRTRPSLQKSQGVEVCAHHIPSPPPAIPYELPSSQKPGACAPKSPNQGASD) is disordered. Ser-87 bears the Phosphoserine mark. In terms of domain architecture, UBX spans 194-271 (DQEPRLLLAV…RIPHKSVLGI (78 aa)).

This sequence belongs to the UBXN10 family. In terms of assembly, interacts with CLUAP1; the interaction is direct and mediates interaction with the intraflagellar transport complex B (IFT-B). Interacts with VCP; the interaction is direct.

The protein resides in the cell projection. The protein localises to the cilium. Functionally, VCP/p97-binding protein required for ciliogenesis. Acts as a tethering factor that facilitates recruitment of VCP/p97 to the intraflagellar transport complex B (IFT-B) in cilia. UBX domain-containing proteins act as tethering factors for VCP/p97 and may specify substrate specificity of VCP/p97. The chain is UBX domain-containing protein 10 from Homo sapiens (Human).